The chain runs to 137 residues: Profilin-3 (137 aa).

Belongs to the profilin family. As to quaternary structure, interacts with ACTRT3. As to expression, testis specific.

The protein localises to the cytoplasm. It localises to the cytoskeleton. The protein resides in the nucleus. Functionally, binds to actin and affects the structure of the cytoskeleton. Slightly reduces actin polymerization. Binds to poly-L-proline, phosphatidylinositol 3-phosphate (PtdIns(3)P), phosphatidylinositol 4,5-bisphosphate (PtdIns(4,5)P2) and phosphatidylinositol 4-phosphate (PtdIns(4)P). May be involved in spermatogenesis. In Homo sapiens (Human), this protein is Profilin-3 (PFN3).